A 305-amino-acid chain; its full sequence is Ornithine carbamoyltransferase (305 aa).

Residues Ser52–Thr55, Gln79, Arg103, and His130–Gln133 contribute to the carbamoyl phosphate site. Residues Asn162, Asp224, and Ser228 to Met229 contribute to the L-ornithine site. Residues Cys264 to Leu265 and Arg292 each bind carbamoyl phosphate.

It belongs to the aspartate/ornithine carbamoyltransferase superfamily. OTCase family.

It localises to the cytoplasm. It catalyses the reaction carbamoyl phosphate + L-ornithine = L-citrulline + phosphate + H(+). Its pathway is amino-acid biosynthesis; L-arginine biosynthesis; L-arginine from L-ornithine and carbamoyl phosphate: step 1/3. In terms of biological role, reversibly catalyzes the transfer of the carbamoyl group from carbamoyl phosphate (CP) to the N(epsilon) atom of ornithine (ORN) to produce L-citrulline. The polypeptide is Ornithine carbamoyltransferase (Pyrobaculum aerophilum (strain ATCC 51768 / DSM 7523 / JCM 9630 / CIP 104966 / NBRC 100827 / IM2)).